The primary structure comprises 256 residues: Adenylate kinase (256 aa).

45–50 (GAGKGT) serves as a coordination point for ATP. Positions 67 to 96 (ATGDLLRQQVAMGTDLGKQAKKIMDQGALV) are NMP. AMP is bound by residues threonine 68, arginine 73, 94 to 96 (ALV), 123 to 126 (GFPR), and glutamine 130. The tract at residues 164–201 (GRLIHPGSGRSYHKIFSPPKQPMKDDITGEPLVQRSDD) is LID. ATP is bound by residues arginine 165 and 174-175 (SY). Residues arginine 198 and arginine 209 each coordinate AMP. Glutamine 237 serves as a coordination point for ATP.

This sequence belongs to the adenylate kinase family. AK2 subfamily. As to quaternary structure, monomer.

Its subcellular location is the cytoplasm. It is found in the cytosol. It localises to the mitochondrion intermembrane space. The enzyme catalyses AMP + ATP = 2 ADP. Its function is as follows. Catalyzes the reversible transfer of the terminal phosphate group between ATP and AMP. Plays an important role in cellular energy homeostasis and in adenine nucleotide metabolism. Adenylate kinase activity is critical for regulation of the phosphate utilization and the AMP de novo biosynthesis pathways. This is Adenylate kinase from Malassezia globosa (strain ATCC MYA-4612 / CBS 7966) (Dandruff-associated fungus).